The following is a 133-amino-acid chain: Hydrogenase maturation factor HypA (133 aa).

His-2 contributes to the Ni(2+) binding site. Residues Cys-73, Cys-75, Cys-105, and Cys-108 each contribute to the Zn(2+) site.

This sequence belongs to the HypA/HybF family.

Involved in the maturation of [NiFe] hydrogenases. Required for nickel insertion into the metal center of the hydrogenase. In Methanosarcina barkeri (strain Fusaro / DSM 804), this protein is Hydrogenase maturation factor HypA.